The chain runs to 363 residues: 3-isopropylmalate dehydrogenase (363 aa).

76–89 (GPKWDTLPGHLRPE) is a binding site for NAD(+). Positions 96, 106, 134, and 223 each coordinate substrate. Residues Asp-223, Asp-247, and Asp-251 each contribute to the Mg(2+) site. An NAD(+)-binding site is contributed by 281-293 (GSAPDIAGKGVAN).

Belongs to the isocitrate and isopropylmalate dehydrogenases family. LeuB type 1 subfamily. As to quaternary structure, homodimer. Mg(2+) is required as a cofactor. Requires Mn(2+) as cofactor.

It is found in the cytoplasm. It carries out the reaction (2R,3S)-3-isopropylmalate + NAD(+) = 4-methyl-2-oxopentanoate + CO2 + NADH. It participates in amino-acid biosynthesis; L-leucine biosynthesis; L-leucine from 3-methyl-2-oxobutanoate: step 3/4. Its function is as follows. Catalyzes the oxidation of 3-carboxy-2-hydroxy-4-methylpentanoate (3-isopropylmalate) to 3-carboxy-4-methyl-2-oxopentanoate. The product decarboxylates to 4-methyl-2 oxopentanoate. This is 3-isopropylmalate dehydrogenase from Halalkalibacterium halodurans (strain ATCC BAA-125 / DSM 18197 / FERM 7344 / JCM 9153 / C-125) (Bacillus halodurans).